Here is a 204-residue protein sequence, read N- to C-terminus: Recombination protein RecR (204 aa).

The C4-type zinc finger occupies Cys-58–Cys-75. The region spanning Thr-83–Pro-181 is the Toprim domain.

Belongs to the RecR family.

May play a role in DNA repair. It seems to be involved in an RecBC-independent recombinational process of DNA repair. It may act with RecF and RecO. In Chlorobium luteolum (strain DSM 273 / BCRC 81028 / 2530) (Pelodictyon luteolum), this protein is Recombination protein RecR.